The sequence spans 506 residues: MKNTLFHRLKRPIAAAFVGALTTLAFAPYQIWLVALITPALLLILIHGQSRRQALWTGYAWGFGQFASGISWVYVSIAGFGGMPLAANLFLMGALIAYLAIYPALFTWSYQRFFAKATLLNLLLAAPALWLIADWLRGWVMTGFPWLWLGYSQIDSPLASFAPIGGVELLTLLLLVGAGAIAYAVIHKRWSMLLIPTVLLSTGYGLSHWDWVTPQPDKTTKVALIQGNVDQNLKWLPSQRWPTIMKYTDLSRENWDADIIIWPEAAIPAFEVELPSYLSNLDSAAKMNQSAIISGIVNQAEDGQFYNSILAVGLTPYGDYSFDLTERYHKHHLLPFGEFVPFEQILRPLAPFFNLPMSSFSRGDFVQPNIVANGHPMAPALCYEIIFNEQVRQNVTDDTDFLLTLSNDAWFGRSIGPLQHMEIARMRALELGKPLIRSTNNGLTAVTDHRGKIIASIPQFETAVLRAELTPTQGQTPYHQLGSWPLYIWVALSLALAWWRKRRTNA.

6 consecutive transmembrane segments (helical) span residues 26–46 (FAPY…LILI), 66–86 (FASG…MPLA), 89–109 (LFLM…FTWS), 113–133 (FFAK…WLIA), 166–186 (GVEL…YAVI), and 192–212 (MLLI…WDWV). A CN hydrolase domain is found at 225–471 (IQGNVDQNLK…TAVLRAELTP (247 aa)). Glutamate 264 functions as the Proton acceptor in the catalytic mechanism. Residue lysine 330 is part of the active site. Catalysis depends on cysteine 382, which acts as the Nucleophile. A helical transmembrane segment spans residues 479–499 (HQLGSWPLYIWVALSLALAWW).

This sequence belongs to the CN hydrolase family. Apolipoprotein N-acyltransferase subfamily.

The protein localises to the cell inner membrane. The enzyme catalyses N-terminal S-1,2-diacyl-sn-glyceryl-L-cysteinyl-[lipoprotein] + a glycerophospholipid = N-acyl-S-1,2-diacyl-sn-glyceryl-L-cysteinyl-[lipoprotein] + a 2-acyl-sn-glycero-3-phospholipid + H(+). Its pathway is protein modification; lipoprotein biosynthesis (N-acyl transfer). Functionally, catalyzes the phospholipid dependent N-acylation of the N-terminal cysteine of apolipoprotein, the last step in lipoprotein maturation. In Vibrio vulnificus (strain CMCP6), this protein is Apolipoprotein N-acyltransferase.